The chain runs to 426 residues: Glutamate-1-semialdehyde 2,1-aminomutase (426 aa).

Residue K265 is modified to N6-(pyridoxal phosphate)lysine.

The protein belongs to the class-III pyridoxal-phosphate-dependent aminotransferase family. HemL subfamily. Homodimer. Requires pyridoxal 5'-phosphate as cofactor.

The protein localises to the cytoplasm. The catalysed reaction is (S)-4-amino-5-oxopentanoate = 5-aminolevulinate. It participates in porphyrin-containing compound metabolism; protoporphyrin-IX biosynthesis; 5-aminolevulinate from L-glutamyl-tRNA(Glu): step 2/2. This Shigella boydii serotype 4 (strain Sb227) protein is Glutamate-1-semialdehyde 2,1-aminomutase.